The chain runs to 278 residues: Elongation factor Ts (278 aa).

The involved in Mg(2+) ion dislocation from EF-Tu stretch occupies residues 80 to 83; sequence TDFV.

The protein belongs to the EF-Ts family.

The protein localises to the cytoplasm. Its function is as follows. Associates with the EF-Tu.GDP complex and induces the exchange of GDP to GTP. It remains bound to the aminoacyl-tRNA.EF-Tu.GTP complex up to the GTP hydrolysis stage on the ribosome. In Pseudarthrobacter chlorophenolicus (strain ATCC 700700 / DSM 12829 / CIP 107037 / JCM 12360 / KCTC 9906 / NCIMB 13794 / A6) (Arthrobacter chlorophenolicus), this protein is Elongation factor Ts.